Here is a 631-residue protein sequence, read N- to C-terminus: ESX-3 secretion system protein EccA3 (631 aa).

An ATP-binding site is contributed by 385–392 (GPPGTGKT).

It belongs to the CbxX/CfxQ family. As to quaternary structure, part of the ESX-3 / type VII secretion system (T7SS), which is composed of cytosolic and membrane components.

The protein localises to the cytoplasm. In terms of biological role, part of the ESX-3 specialized secretion system, which is important for iron and zinc uptake or homeostasis. EccA3 exhibits ATPase activity and may provide energy for the export of ESX-3 substrates. This Mycobacterium tuberculosis (strain CDC 1551 / Oshkosh) protein is ESX-3 secretion system protein EccA3.